Here is a 448-residue protein sequence, read N- to C-terminus: Argininosuccinate synthase (448 aa).

ATP contacts are provided by residues 17–25 and A43; that span reads AFSGGLDTS. Residue Y99 coordinates L-citrulline. Positions 129 and 131 each coordinate ATP. L-aspartate-binding residues include T131, N135, and D136. An L-citrulline-binding site is contributed by N135. D136 serves as a coordination point for ATP. R139 and S192 together coordinate L-citrulline. An ATP-binding site is contributed by D194. L-citrulline is bound by residues T201, E203, and E280.

This sequence belongs to the argininosuccinate synthase family. Type 2 subfamily. In terms of assembly, homotetramer.

Its subcellular location is the cytoplasm. The enzyme catalyses L-citrulline + L-aspartate + ATP = 2-(N(omega)-L-arginino)succinate + AMP + diphosphate + H(+). Its pathway is amino-acid biosynthesis; L-arginine biosynthesis; L-arginine from L-ornithine and carbamoyl phosphate: step 2/3. In Acidovorax ebreus (strain TPSY) (Diaphorobacter sp. (strain TPSY)), this protein is Argininosuccinate synthase.